The following is a 559-amino-acid chain: 3-phosphoinositide-dependent protein kinase 1 (559 aa).

A Phosphotyrosine; by SRC and INSR modification is found at tyrosine 9. Serine 25 bears the Phosphoserine mark. A disordered region spans residues 25-83 (SPSMVRSQTEPGSSPGIPSGVSRQGSTMDGTTAEARPSTNPLQQHPAQLPPQPRKKRPE). Residues 35–44 (PGSSPGIPSG) show a composition bias toward low complexity. Residues 45–54 (VSRQGSTMDG) show a composition bias toward polar residues. The region spanning 85–345 (FKFGKILGEG…YGPLKAHPFF (261 aa)) is the Protein kinase domain. ATP contacts are provided by residues 95-97 (SFS) and lysine 114. The PIF-pocket stretch occupies residues 116–160 (LEKRHIIKENKVPYVTRERDVMSRLDHPFFVKLYFTFQDDEKLYF). ATP contacts are provided by residues 163 to 165 (SYA) and glutamate 169. Aspartate 208 functions as the Proton acceptor in the catalytic mechanism. Glutamate 212 and aspartate 226 together coordinate ATP. Serine 244 carries the post-translational modification Phosphoserine. N6-acetyllysine is present on lysine 307. Residue threonine 357 is modified to Phosphothreonine; by MELK. A phosphotyrosine; by SRC and INSR mark is found at tyrosine 376 and tyrosine 379. A Phosphoserine modification is found at serine 396. Serine 397 carries the post-translational modification Phosphoserine; by MAP3K5. At serine 399 the chain carries Phosphoserine. Serine 401 is modified (phosphoserine; by MAP3K5). Serine 413 is modified (phosphoserine). Positions 462–553 (KMGPVDKRKG…EVWRQQYQSN (92 aa)) constitute a PH domain. Position 504 is a phosphoserine; by PKC/PRKCQ (serine 504). Threonine 516 is modified (phosphothreonine; by autocatalysis). Serine 532 carries the post-translational modification Phosphoserine; by PKC/PRKCQ.

The protein belongs to the protein kinase superfamily. AGC Ser/Thr protein kinase family. PDPK1 subfamily. Homodimer in its autoinhibited state. Active as monomer. Interacts with NPRL2, PAK1, PTK2B, GRB14, STRAP and IKKB. The Tyr-9 phosphorylated form interacts with SRC, RASA1 and CRK (via their SH2 domains). Interacts with SGK3 in a phosphorylation-dependent manner. The tyrosine-phosphorylated form interacts with PTPN6. The Ser-244 phosphorylated form interacts with YWHAH and YWHAQ. Binds INSR in response to insulin. Interacts (via PH domain) with SMAD3, SMAD4 and SMAD7. Interacts with PKN2; the interaction stimulates PDPK1 autophosphorylation, its PI(3,4,5)P3-dependent kinase activity toward 'Ser-473' of AKT1 but also activates its kinase activity toward PRKCD and PRKCZ. Interacts with PKN1 (via C-terminus) and PPARG. Post-translationally, phosphorylation on Ser-244 in the activation loop is required for full activity. PDPK1 itself can autophosphorylate Ser-244, leading to its own activation. Autophosphorylation is inhibited by the apoptotic C-terminus cleavage product of PKN2. Tyr-9 phosphorylation is critical for stabilization of both PDPK1 and the PDPK1/SRC complex via HSP90-mediated protection of PDPK1 degradation. Angiotensin II stimulates the tyrosine phosphorylation of PDPK1 in vascular smooth muscle in a calcium- and SRC-dependent manner. Phosphorylated on Tyr-9, Tyr-376 and Tyr-379 by INSR in response to insulin. Palmitate negatively regulates autophosphorylation at Ser-244 and palmitate-induced phosphorylation at Ser-532 and Ser-504 by PKC/PRKCQ negatively regulates its ability to phosphorylate PKB/AKT1. Phosphorylation at Thr-357 by MELK partially inhibits kinase activity, the inhibition is cooperatively enhanced by phosphorylation at Ser-397 and Ser-401 by MAP3K5. Monoubiquitinated in the kinase domain, deubiquitinated by USP4. As to expression, highly expressed in heart, brain, liver and testis, also expressed in embryonic cells.

The protein resides in the cytoplasm. Its subcellular location is the nucleus. It is found in the cell membrane. It localises to the cell junction. The protein localises to the focal adhesion. It carries out the reaction L-seryl-[protein] + ATP = O-phospho-L-seryl-[protein] + ADP + H(+). It catalyses the reaction L-threonyl-[protein] + ATP = O-phospho-L-threonyl-[protein] + ADP + H(+). Its activity is regulated as follows. Homodimerization regulates its activity by maintaining the kinase in an autoinhibitory conformation. NPRL2 down-regulates its activity by interfering with tyrosine phosphorylation at the Tyr-9, Tyr-376 and Tyr-379 residues. The 14-3-3 protein YWHAQ acts as a negative regulator by association with the residues surrounding the Ser-244 residue. STRAP positively regulates its activity by enhancing its autophosphorylation and by stimulating its dissociation from YWHAQ. SMAD2, SMAD3, SMAD4 and SMAD7 also positively regulate its activity by stimulating its dissociation from YWHAQ. Activated by phosphorylation on Tyr-9, Tyr-376 and Tyr-379 by INSR in response to insulin. Functionally, serine/threonine kinase which acts as a master kinase, phosphorylating and activating a subgroup of the AGC family of protein kinases. Its targets include: protein kinase B (PKB/AKT1, PKB/AKT2, PKB/AKT3), p70 ribosomal protein S6 kinase (RPS6KB1), p90 ribosomal protein S6 kinase (RPS6KA1, RPS6KA2 and RPS6KA3), cyclic AMP-dependent protein kinase (PRKACA), protein kinase C (PRKCD and PRKCZ), serum and glucocorticoid-inducible kinase (SGK1, SGK2 and SGK3), p21-activated kinase-1 (PAK1), TSSK3, protein kinase PKN (PKN1 and PKN2). Plays a central role in the transduction of signals from insulin by providing the activating phosphorylation to PKB/AKT1, thus propagating the signal to downstream targets controlling cell proliferation and survival, as well as glucose and amino acid uptake and storage. Negatively regulates the TGF-beta-induced signaling by: modulating the association of SMAD3 and SMAD7 with TGF-beta receptor, phosphorylating SMAD2, SMAD3, SMAD4 and SMAD7, preventing the nuclear translocation of SMAD3 and SMAD4 and the translocation of SMAD7 from the nucleus to the cytoplasm in response to TGF-beta. Activates PPARG transcriptional activity and promotes adipocyte differentiation. Activates the NF-kappa-B pathway via phosphorylation of IKKB. The tyrosine phosphorylated form is crucial for the regulation of focal adhesions by angiotensin II. Controls proliferation, survival, and growth of developing pancreatic cells. Participates in the regulation of Ca(2+) entry and Ca(2+)-activated K(+) channels of mast cells. Essential for the motility of vascular endothelial cells (ECs) and is involved in the regulation of their chemotaxis. Plays a critical role in cardiac homeostasis by serving as a dual effector for cell survival and beta-adrenergic response. Plays an important role during thymocyte development by regulating the expression of key nutrient receptors on the surface of pre-T cells and mediating Notch-induced cell growth and proliferative responses. Provides negative feedback inhibition to toll-like receptor-mediated NF-kappa-B activation in macrophages. The chain is 3-phosphoinositide-dependent protein kinase 1 (Pdpk1) from Mus musculus (Mouse).